The sequence spans 399 residues: Acetate kinase (399 aa).

Residue asparagine 7 participates in Mg(2+) binding. An ATP-binding site is contributed by lysine 14. Arginine 91 provides a ligand contact to substrate. Aspartate 148 functions as the Proton donor/acceptor in the catalytic mechanism. ATP is bound by residues 208-212 (HLGNG), 283-285 (DFR), and 331-335 (GLGEN). Mg(2+) is bound at residue glutamate 384.

Belongs to the acetokinase family. In terms of assembly, homodimer. Mg(2+) serves as cofactor. It depends on Mn(2+) as a cofactor.

The protein localises to the cytoplasm. The catalysed reaction is acetate + ATP = acetyl phosphate + ADP. It functions in the pathway metabolic intermediate biosynthesis; acetyl-CoA biosynthesis; acetyl-CoA from acetate: step 1/2. Catalyzes the formation of acetyl phosphate from acetate and ATP. Can also catalyze the reverse reaction. This chain is Acetate kinase, found in Desulfitobacterium hafniense (strain DSM 10664 / DCB-2).